The sequence spans 217 residues: Heart- and neural crest derivatives-expressed protein 2 (217 aa).

Residues 76–116 (DHSHYGGVPPGAGPPGLGGPRPVKRRGTANRKERRRTQSIN) form a disordered region. The segment covering 83–94 (VPPGAGPPGLGG) has biased composition (gly residues). A compositionally biased stretch (basic residues) spans 97–112 (PVKRRGTANRKERRRT). The 53-residue stretch at 99–151 (KRRGTANRKERRRTQSINSAFAELRECIPNVPADTKLSKIKTLRLATSYIAYL) folds into the bHLH domain.

Efficient DNA binding requires dimerization with another bHLH protein. Forms homodimers and heterodimers with TCF3 gene products E12 and E47, HAND1 and HEY1, HEY2 and HEYL (hairy-related transcription factors).

The protein localises to the nucleus. In terms of biological role, essential for cardiac morphogenesis, particularly for the formation of the right ventricle and of the aortic arch arteries. Required for vascular development and regulation of angiogenesis, possibly through a VEGF signaling pathway. Also plays an important role in limb development, particularly in the establishment of anterior-posterior polarization, acting as an upstream regulator of sonic hedgehog (SHH) induction in the limb bud. Is involved in the development of branchial arches, which give rise to unique structures in the head and neck. Binds DNA on E-box consensus sequence 5'-CANNTG-3'. This is Heart- and neural crest derivatives-expressed protein 2 (Hand2) from Rattus norvegicus (Rat).